Here is a 68-residue protein sequence, read N- to C-terminus: MDQVMAWVEPGKQFAKDSIRLVKRCTKPDRKEFQKIAVATAIGFAIMGFIGFFVKLIHIPINNIIVGS.

Residues 1-32 (MDQVMAWVEPGKQFAKDSIRLVKRCTKPDRKE) are Cytoplasmic-facing. Residues 33–61 (FQKIAVATAIGFAIMGFIGFFVKLIHIPI) form a helical membrane-spanning segment. At 62–68 (NNIIVGS) the chain is on the extracellular side.

The protein belongs to the SecE/SEC61-gamma family. In terms of assembly, heterotrimeric complex composed of SEC61-alpha, SEC61-beta and SEC61-gamma. Component of the ribosome-associated ER translocon complex.

The protein resides in the endoplasmic reticulum membrane. In terms of biological role, necessary for protein translocation in the endoplasmic reticulum and multi-pass membrane protein biogenesis. The sequence is that of Protein transport protein Sec61 subunit gamma (SEC61G) from Ciona intestinalis (Transparent sea squirt).